A 137-amino-acid polypeptide reads, in one-letter code: MGFRRLSFPTDFIFLFPNHICLPALSKPYQRREISSWLARWFPKDPAKPVVAQKTPIRLELVAGKTYRWCVCGRSKNQPFCDGSHFFQRTGLSPLKFKAQETRTVALCTCKATQRPPYCDGTHKSEQVQKAEVGSPL.

Residue Lys-65 is modified to N6-acetyllysine; alternate. Lys-65 bears the N6-succinyllysine; alternate mark. [2Fe-2S] cluster is bound by residues Cys-70, Cys-72, Cys-81, and His-85. Lys-96 carries the N6-acetyllysine modification. Cys-108, Cys-110, Cys-119, and His-123 together coordinate [2Fe-2S] cluster. Lys-124 is subject to N6-acetyllysine; alternate. Residue Lys-124 is modified to N6-succinyllysine; alternate.

It belongs to the CISD protein family. In terms of assembly, monomer. [2Fe-2S] cluster is required as a cofactor.

Its subcellular location is the mitochondrion. In terms of biological role, can transfer its iron-sulfur clusters to the apoferrodoxins FDX1 and FDX2. Contributes to mitochondrial iron homeostasis and in maintaining normal levels of free iron and reactive oxygen species, and thereby contributes to normal mitochondrial function. This chain is CDGSH iron-sulfur domain-containing protein 3, mitochondrial (Cisd3), found in Mus musculus (Mouse).